Consider the following 864-residue polypeptide: Mitochondrial 15S rRNA processing factor CCM1 (864 aa).

The N-terminal 76 residues, 1 to 76 (MYMARCGPKN…REFSNTLKER (76 aa)), are a transit peptide targeting the mitochondrion. PPR repeat units follow at residues 319-353 (NKQN…STKH) and 356-390 (DICT…NIKP).

The protein belongs to the CCM1 family. Binds to mitochondrial small subunit 15S rRNA.

Its subcellular location is the mitochondrion. Its function is as follows. Regulates mitochondrial small subunit maturation by controlling 15S rRNA 5'-end processing. Localizes to the 5' precursor of the 15S rRNA in a position that is subsequently occupied by mS47 in the mature yeast mtSSU. Uses structure and sequence-specific RNA recognition, binding to a single-stranded region of the precursor and specifically recognizing bases -6 to -1. The exchange of Ccm1 for mS47 is coupled to the irreversible removal of precursor rRNA that is accompanied by conformational changes of the mitoribosomal proteins uS5m and mS26. These conformational changes signal completion of 5'-end rRNA processing through protection of the mature 5'-end of the 15S rRNA and stabilization of mS47. The removal of the 5' precursor together with the dissociation of Ccm1 may be catalyzed by the 5'-3' exoribonuclease Pet127. Involved in the specific removal of group I introns in mitochondrial encoded transcripts. This Saccharomyces cerevisiae (strain Lalvin EC1118 / Prise de mousse) (Baker's yeast) protein is Mitochondrial 15S rRNA processing factor CCM1 (CCM1).